Consider the following 182-residue polypeptide: Protein LURP-one-related 7 (182 aa).

The protein belongs to the LOR family.

Might be related to the phospholipid scramblase and tubby-like superfamily of membrane tethered transcription factors. This Arabidopsis thaliana (Mouse-ear cress) protein is Protein LURP-one-related 7.